The following is a 309-amino-acid chain: MAPSHWRVILNGKSTDNMDLREAVGTLRKRGIQLDVRVTWEDGDAERYVGEAVADGVHTVVAAGGDGTLSEVAAALAHHEGDAASLPSLGLVPLGTANDFATAANLPIAPLEALTLIAERVAQPVDLLRIDADHGPHWCANVASGGFGTQVTVETDEGLKKMLGGLAYLITGMSRLGRIDPISARFSGPEFSWEGEFIALGLGNGRQAGGGQALCPEALIDDGLLDVTIVPDLDGEVAATLGTLVIGGKQAALERVAVRARVPWLEIVSQQPLTLNLDGEPETSRHFRIECVPARLRMHLPGECPLLGG.

In terms of domain architecture, DAGKc spans 1–134 (MAPSHWRVIL…VDLLRIDADH (134 aa)). Residues threonine 39, 65 to 71 (GDGTLSE), and threonine 96 each bind ATP. Mg(2+) is bound by residues leucine 219, aspartate 222, and leucine 224. Residue glutamate 280 is the Proton acceptor of the active site.

The protein belongs to the diacylglycerol/lipid kinase family. YegS lipid kinase subfamily. It depends on Mg(2+) as a cofactor. Ca(2+) is required as a cofactor.

The protein localises to the cytoplasm. In terms of biological role, probably phosphorylates lipids; the in vivo substrate is unknown. This is Probable lipid kinase YegS-like from Xanthomonas euvesicatoria pv. vesicatoria (strain 85-10) (Xanthomonas campestris pv. vesicatoria).